We begin with the raw amino-acid sequence, 174 residues long: Chorismate pyruvate-lyase (174 aa).

4 residues coordinate substrate: Met36, Arg78, Leu116, and Glu157.

The protein belongs to the UbiC family. As to quaternary structure, monomer.

It is found in the cytoplasm. The enzyme catalyses chorismate = 4-hydroxybenzoate + pyruvate. It participates in cofactor biosynthesis; ubiquinone biosynthesis. In terms of biological role, removes the pyruvyl group from chorismate, with concomitant aromatization of the ring, to provide 4-hydroxybenzoate (4HB) for the ubiquinone pathway. This Erwinia tasmaniensis (strain DSM 17950 / CFBP 7177 / CIP 109463 / NCPPB 4357 / Et1/99) protein is Chorismate pyruvate-lyase.